A 1448-amino-acid chain; its full sequence is Sister chromatid cohesion protein PDS5 homolog B-A (1448 aa).

An HEAT repeat occupies 383 to 419 (LLVNDQLLNFVRERTLDKRWRVRKEAMMGLAQIYKKY). The span at 1141–1155 (AGKQMLSKSSRMETV) shows a compositional bias: polar residues. Residues 1141–1448 (AGKQMLSKSS…TGRLRSAKKR (308 aa)) form a disordered region. Over residues 1156–1168 (SNASSGSNPSSPG) the composition is skewed to low complexity. A compositionally biased stretch (acidic residues) spans 1177 to 1186 (MELDQSENED). 3 stretches are compositionally biased toward basic and acidic residues: residues 1196–1214 (KKSD…LEKP), 1233–1243 (ELSKPAQEPKS), and 1264–1273 (WQEKRLKEDL). Over residues 1285 to 1294 (KKGRRGRPPK) the composition is skewed to basic residues. The a.T hook 1 DNA-binding region spans 1286 to 1298 (KGRRGRPPKSAKM). The span at 1324 to 1341 (PTDEDDHLEISEEQDFEN) shows a compositional bias: acidic residues. Residues 1346 to 1356 (RKGRGSSRRTP) show a composition bias toward basic residues. 2 consecutive DNA-binding regions (a.T hook) follow at residues 1374–1386 (QKRR…TPTV) and 1390–1402 (KSHV…VVSK). A compositionally biased stretch (basic residues) spans 1389 to 1399 (KKSHVGRPRKV).

The protein belongs to the PDS5 family. As to quaternary structure, interacts with the cohesin complex. Phosphorylated in mitotic cells.

Its subcellular location is the nucleus. In terms of biological role, plays a role in androgen-induced proliferative arrest. Required for maintenance of sister chromatid cohesion during mitosis. This Xenopus laevis (African clawed frog) protein is Sister chromatid cohesion protein PDS5 homolog B-A (pds5b-a).